Consider the following 192-residue polypeptide: NADH-quinone oxidoreductase subunit B (192 aa).

Residues C71, C72, C136, and C166 each contribute to the [4Fe-4S] cluster site.

It belongs to the complex I 20 kDa subunit family. As to quaternary structure, NDH-1 is composed of 14 different subunits. Subunits NuoB, C, D, E, F, and G constitute the peripheral sector of the complex. Requires [4Fe-4S] cluster as cofactor.

It localises to the cell inner membrane. The enzyme catalyses a quinone + NADH + 5 H(+)(in) = a quinol + NAD(+) + 4 H(+)(out). NDH-1 shuttles electrons from NADH, via FMN and iron-sulfur (Fe-S) centers, to quinones in the respiratory chain. Couples the redox reaction to proton translocation (for every two electrons transferred, four hydrogen ions are translocated across the cytoplasmic membrane), and thus conserves the redox energy in a proton gradient. This chain is NADH-quinone oxidoreductase subunit B, found in Azorhizobium caulinodans (strain ATCC 43989 / DSM 5975 / JCM 20966 / LMG 6465 / NBRC 14845 / NCIMB 13405 / ORS 571).